The chain runs to 295 residues: Small ribosomal subunit protein uS2 (295 aa).

Residue S2 is modified to N-acetylserine. At S43 the chain carries Phosphoserine. Residue K52 is modified to N6-acetyllysine. Residues 54–113 (TWEKLLLAARAIVAIENPADVSVISSRNTGQRAVLKFAAATGATPIAGRFTPGTFTNQIQ) are interaction with PPP1R16B. K89 is modified (N6-acetyllysine; alternate). A Glycyl lysine isopeptide (Lys-Gly) (interchain with G-Cter in SUMO2); alternate cross-link involves residue K89. T97 bears the Phosphothreonine mark. Laminin-binding regions lie at residues 161–180 (IPCNNKGAHSVGLMWWMLAR) and 205–229 (RDPEEIEKEEQAAAEKAVTKEEFQG). 5 [DE]-W-[ST] repeats span residues 230–232 (EWT), 247–249 (DWS), 266–268 (DWS), 275–277 (DWS), and 293–295 (EWS). Residues 242–295 (QPEVADWSEGVQVPSVPIQQFPTEDWSAQPATEDWSAAPTAQATEWVGATTEWS) are laminin-binding. The tract at residues 266-295 (DWSAQPATEDWSAAPTAQATEWVGATTEWS) is disordered.

The protein belongs to the universal ribosomal protein uS2 family. As to quaternary structure, monomer (37LRP) and homodimer (67LR). Component of the small ribosomal subunit. Mature ribosomes consist of a small (40S) and a large (60S) subunit. The 40S subunit contains about 33 different proteins and 1 molecule of RNA (18S). The 60S subunit contains about 49 different proteins and 3 molecules of RNA (28S, 5.8S and 5S). Interacts with RPS21. Interacts with several laminins including at least LAMB1. Interacts with MDK. Interacts with PRNP. The mature dimeric form interacts with PPP1R16B (via its fourth ankyrin repeat). Interacts with PPP1CA only in the presence of PPP1R16B. Post-translationally, acylated. Acylation may be a prerequisite for conversion of the monomeric 37 kDa laminin receptor precursor (37LRP) to the mature dimeric 67 kDa laminin receptor (67LR), and may provide a mechanism for membrane association. In terms of processing, cleaved by stromelysin-3 (ST3) at the cell surface. Cleavage by stromelysin-3 may be a mechanism to alter cell-extracellular matrix interactions.

Its subcellular location is the cell membrane. The protein resides in the cytoplasm. It localises to the nucleus. Required for the assembly and/or stability of the 40S ribosomal subunit. Required for the processing of the 20S rRNA-precursor to mature 18S rRNA in a late step of the maturation of 40S ribosomal subunits. Also functions as a cell surface receptor for laminin. Plays a role in cell adhesion to the basement membrane and in the consequent activation of signaling transduction pathways. May play a role in cell fate determination and tissue morphogenesis. Also acts as a receptor for several other ligands, including the pathogenic prion protein, viruses, and bacteria. Acts as a PPP1R16B-dependent substrate of PPP1CA. Enables malignant tumor cells to penetrate laminin tissue and vessel barriers. Activates precursor thymic anti-OFA/iLRP specific cytotoxic T-cell. May induce CD8 T-suppressor cells secreting IL-10. The polypeptide is Small ribosomal subunit protein uS2 (Rpsa) (Mus musculus (Mouse)).